We begin with the raw amino-acid sequence, 277 residues long: NH(3)-dependent NAD(+) synthetase (277 aa).

46-53 is a binding site for ATP; it reads GISGGQDS. Aspartate 52 contributes to the Mg(2+) binding site. Residue arginine 141 coordinates deamido-NAD(+). Threonine 161 contributes to the ATP binding site. Residue glutamate 166 participates in Mg(2+) binding. Deamido-NAD(+)-binding residues include lysine 174 and aspartate 181. Positions 190 and 212 each coordinate ATP. 262–263 contacts deamido-NAD(+); it reads HK.

This sequence belongs to the NAD synthetase family. In terms of assembly, homodimer.

The catalysed reaction is deamido-NAD(+) + NH4(+) + ATP = AMP + diphosphate + NAD(+) + H(+). It participates in cofactor biosynthesis; NAD(+) biosynthesis; NAD(+) from deamido-NAD(+) (ammonia route): step 1/1. Its function is as follows. Catalyzes the ATP-dependent amidation of deamido-NAD to form NAD. Uses ammonia as a nitrogen source. The sequence is that of NH(3)-dependent NAD(+) synthetase from Corynebacterium efficiens (strain DSM 44549 / YS-314 / AJ 12310 / JCM 11189 / NBRC 100395).